The following is a 501-amino-acid chain: Lysine--tRNA ligase (501 aa).

Mg(2+)-binding residues include glutamate 411 and glutamate 418.

Belongs to the class-II aminoacyl-tRNA synthetase family. As to quaternary structure, homodimer. Requires Mg(2+) as cofactor.

The protein localises to the cytoplasm. The catalysed reaction is tRNA(Lys) + L-lysine + ATP = L-lysyl-tRNA(Lys) + AMP + diphosphate. The chain is Lysine--tRNA ligase from Thiobacillus denitrificans (strain ATCC 25259 / T1).